A 355-amino-acid chain; its full sequence is Proto-oncogene Wnt-3 (355 aa).

The first 21 residues, 1–21, serve as a signal peptide directing secretion; it reads MEPHLLGLLLGLLLGGTRVLA. Disulfide bonds link cysteine 80-cysteine 91, cysteine 131-cysteine 139, cysteine 141-cysteine 158, cysteine 206-cysteine 220, cysteine 208-cysteine 215, cysteine 284-cysteine 315, cysteine 300-cysteine 310, cysteine 314-cysteine 354, cysteine 330-cysteine 345, cysteine 332-cysteine 342, and cysteine 337-cysteine 338. Asparagine 90 carries N-linked (GlcNAc...) asparagine glycosylation. Serine 212 carries the O-palmitoleoyl serine; by PORCN lipid modification. N-linked (GlcNAc...) asparagine glycosylation is present at asparagine 301.

It belongs to the Wnt family. In terms of assembly, forms a soluble 1:1 complex with AFM; this prevents oligomerization and is required for prolonged biological activity. The complex with AFM may represent the physiological form in body fluids. Interacts with PORCN. Interacts with WLS. Post-translationally, palmitoleoylation is required for efficient binding to frizzled receptors. Depalmitoleoylation leads to Wnt signaling pathway inhibition.

It localises to the secreted. The protein localises to the extracellular space. Its subcellular location is the extracellular matrix. Ligand for members of the frizzled family of seven transmembrane receptors. Functions in the canonical Wnt signaling pathway that results in activation of transcription factors of the TCF/LEF family. Required for normal gastrulation, formation of the primitive streak, and for the formation of the mesoderm during early embryogenesis. Required for normal formation of the apical ectodermal ridge. Required for normal embryonic development, and especially for limb development. This chain is Proto-oncogene Wnt-3 (WNT3), found in Homo sapiens (Human).